The sequence spans 333 residues: Ketol-acid reductoisomerase (NADP(+)) (333 aa).

Residues 2–182 enclose the KARI N-terminal Rossmann domain; the sequence is AKIFYDSDCN…GASRAGIILT (181 aa). NADP(+) contacts are provided by residues 25–28, serine 51, serine 53, and 83–86; these read FGSQ and DEKQ. Histidine 108 is a catalytic residue. Glycine 134 lines the NADP(+) pocket. In terms of domain architecture, KARI C-terminal knotted spans 183 to 328; it reads TFKEETETDL…KELRKMMPWI (146 aa). Positions 191, 195, 227, and 231 each coordinate Mg(2+). Serine 252 contributes to the substrate binding site.

The protein belongs to the ketol-acid reductoisomerase family. It depends on Mg(2+) as a cofactor.

The catalysed reaction is (2R)-2,3-dihydroxy-3-methylbutanoate + NADP(+) = (2S)-2-acetolactate + NADPH + H(+). It carries out the reaction (2R,3R)-2,3-dihydroxy-3-methylpentanoate + NADP(+) = (S)-2-ethyl-2-hydroxy-3-oxobutanoate + NADPH + H(+). The protein operates within amino-acid biosynthesis; L-isoleucine biosynthesis; L-isoleucine from 2-oxobutanoate: step 2/4. Its pathway is amino-acid biosynthesis; L-valine biosynthesis; L-valine from pyruvate: step 2/4. Involved in the biosynthesis of branched-chain amino acids (BCAA). Catalyzes an alkyl-migration followed by a ketol-acid reduction of (S)-2-acetolactate (S2AL) to yield (R)-2,3-dihydroxy-isovalerate. In the isomerase reaction, S2AL is rearranged via a Mg-dependent methyl migration to produce 3-hydroxy-3-methyl-2-ketobutyrate (HMKB). In the reductase reaction, this 2-ketoacid undergoes a metal-dependent reduction by NADPH to yield (R)-2,3-dihydroxy-isovalerate. The protein is Ketol-acid reductoisomerase (NADP(+)) of Caldicellulosiruptor bescii (strain ATCC BAA-1888 / DSM 6725 / KCTC 15123 / Z-1320) (Anaerocellum thermophilum).